Consider the following 1091-residue polypeptide: ATP-dependent helicase/deoxyribonuclease subunit B (1091 aa).

It belongs to the helicase family. AddB/RexB type 2 subfamily. Heterodimer of AddA and RexB. Mg(2+) serves as cofactor.

The heterodimer acts as both an ATP-dependent DNA helicase and an ATP-dependent, dual-direction single-stranded exonuclease. Recognizes the chi site generating a DNA molecule suitable for the initiation of homologous recombination. This subunit has 5' -&gt; 3' nuclease activity but not helicase activity. The polypeptide is ATP-dependent helicase/deoxyribonuclease subunit B (Streptococcus pneumoniae (strain CGSP14)).